A 240-amino-acid chain; its full sequence is DNA repair protein RecO (240 aa).

Belongs to the RecO family.

Involved in DNA repair and RecF pathway recombination. The chain is DNA repair protein RecO from Xanthomonas euvesicatoria pv. vesicatoria (strain 85-10) (Xanthomonas campestris pv. vesicatoria).